The primary structure comprises 342 residues: Spermidine synthase (342 aa).

Residues 9–42 form a disordered region; sequence MKGTELPVKRPREEEAETEMEAANNSNNGCEKEE. Residues 52-289 form the PABS domain; that stretch reads PGWFSEISPL…GMIGFMLCST (238 aa). Position 83 (glutamine 83) interacts with S-adenosyl 3-(methylsulfanyl)propylamine. Tyrosine 113 is a putrescine binding site. Residues glutamine 114, aspartate 138, glutamate 158, 189 to 190, and aspartate 208 contribute to the S-adenosyl 3-(methylsulfanyl)propylamine site; that span reads DG. Aspartate 208 functions as the Proton acceptor in the catalytic mechanism. Putrescine contacts are provided by residues 208 to 211 and tyrosine 277; that span reads DSSD.

Belongs to the spermidine/spermine synthase family.

It catalyses the reaction S-adenosyl 3-(methylsulfanyl)propylamine + putrescine = S-methyl-5'-thioadenosine + spermidine + H(+). It functions in the pathway amine and polyamine biosynthesis; spermidine biosynthesis; spermidine from putrescine: step 1/1. The chain is Spermidine synthase (SPDSYN) from Solanum lycopersicum (Tomato).